The primary structure comprises 704 residues: Glycine--tRNA ligase beta subunit (704 aa).

The protein belongs to the class-II aminoacyl-tRNA synthetase family. As to quaternary structure, tetramer of two alpha and two beta subunits.

The protein localises to the cytoplasm. It catalyses the reaction tRNA(Gly) + glycine + ATP = glycyl-tRNA(Gly) + AMP + diphosphate. This Delftia acidovorans (strain DSM 14801 / SPH-1) protein is Glycine--tRNA ligase beta subunit.